The following is a 439-amino-acid chain: Oxysterol-binding protein 6 (439 aa).

Disordered regions lie at residues 1 to 40 (MSAK…SGAD) and 409 to 439 (ESST…QTTN). Composition is skewed to polar residues over residues 409-419 (ESSTPNLSKVD) and 429-439 (PVDNSIPQTTN).

The protein belongs to the OSBP family.

The polypeptide is Oxysterol-binding protein 6 (osbF) (Dictyostelium discoideum (Social amoeba)).